A 333-amino-acid chain; its full sequence is Foldase protein PrsA (333 aa).

The first 22 residues, 1–22 (MKSAKQIATALLVGMFTFSAVG), serve as a signal peptide directing secretion. Cys23 carries the N-palmitoyl cysteine lipid modification. Cys23 carries the S-diacylglycerol cysteine lipid modification. Positions 192–283 (PNTVHLAHIL…FGWHVIKCIK (92 aa)) constitute a PpiC domain.

This sequence belongs to the PrsA family.

The protein localises to the cell membrane. The enzyme catalyses [protein]-peptidylproline (omega=180) = [protein]-peptidylproline (omega=0). Plays a major role in protein secretion by helping the post-translocational extracellular folding of several secreted proteins. In Clostridium acetobutylicum (strain ATCC 824 / DSM 792 / JCM 1419 / IAM 19013 / LMG 5710 / NBRC 13948 / NRRL B-527 / VKM B-1787 / 2291 / W), this protein is Foldase protein PrsA.